We begin with the raw amino-acid sequence, 635 residues long: BTB/POZ domain and ankyrin repeat-containing protein NPR2 (635 aa).

Residues 97 to 191 (SDADVDVADG…LYTGKLRPAP (95 aa)) form the BTB domain. The segment covering 138–152 (AAGGGGGGGGGGGER) has biased composition (gly residues). The tract at residues 138–157 (AAGGGGGGGGGGGERTGGRP) is disordered. A C2HC NPR-type zinc finger spans residues 194 to 208 (VVSCADPMCPHDSCP). 4 residues coordinate Zn(2+): cysteine 197, cysteine 202, histidine 204, and cysteine 207. ANK repeat units lie at residues 317-347 (KRVR…TLDD), 349-376 (NALH…NLNL), and 380-409 (RGYT…AVSQ). The interval 439–576 (ESNKDRLCID…FLEDDLPDSP (138 aa)) is salicylic acid-binding core (SBC). Arginine 484 is a salicylate binding site.

It belongs to the plant 'ANKYRIN-BTB/POZ' family. 'NPR1-like' subfamily. As to quaternary structure, interacts with NRR. Interacts with TGAL1 and TGAL11.

The protein resides in the nucleus. The protein operates within protein modification; protein ubiquitination. In terms of biological role, salicylic acid (SA)-binding substrate-specific adapter of an E3 ubiquitin-protein ligase complex (CUL3-RBX1-BTB) which mediates the ubiquitination and subsequent proteasomal degradation of target proteins. May be involved in regulating basal defense responses against pathogens, and may be involved in crosstalk between SA- and JA-dependent signaling pathways. Does not seem to be involved in defense response against the bacterial blight disease caused by Xanthomonas oryzae pv. oryzae (Xoo). Over-expression of NPR2/NH2 does not confer disease resistance to Xoo. This is BTB/POZ domain and ankyrin repeat-containing protein NPR2 from Oryza sativa subsp. japonica (Rice).